The primary structure comprises 464 residues: Vitamin D3 hydroxylase-associated protein (464 aa).

Residues Lys-150 and Ser-225 each act as charge relay system in the active site. Ser-249 (acyl-ester intermediate) is an active-site residue.

The protein belongs to the amidase family. In terms of tissue distribution, kidney.

It localises to the mitochondrion inner membrane. Its function is as follows. May have a vitamin D3 hydroxylase regulatory function. The polypeptide is Vitamin D3 hydroxylase-associated protein (Gallus gallus (Chicken)).